The primary structure comprises 450 residues: tRNA modification GTPase MnmE (450 aa).

3 residues coordinate (6S)-5-formyl-5,6,7,8-tetrahydrofolate: Arg25, Glu86, and Arg126. The region spanning 221-373 is the TrmE-type G domain; sequence GLRVALVGRP…LVQALLERCG (153 aa). Asn231 is a K(+) binding site. Residues 231-236, 250-256, 275-278, and 336-339 contribute to the GTP site; these read NVGKSS, TDLPGTT, DTAG, and NKAD. Ser235 contacts Mg(2+). Residues Thr250, Leu252, and Thr255 each coordinate K(+). Thr256 is a binding site for Mg(2+). Residue Lys450 coordinates (6S)-5-formyl-5,6,7,8-tetrahydrofolate.

The protein belongs to the TRAFAC class TrmE-Era-EngA-EngB-Septin-like GTPase superfamily. TrmE GTPase family. As to quaternary structure, homodimer. Heterotetramer of two MnmE and two MnmG subunits. It depends on K(+) as a cofactor.

Its subcellular location is the cytoplasm. In terms of biological role, exhibits a very high intrinsic GTPase hydrolysis rate. Involved in the addition of a carboxymethylaminomethyl (cmnm) group at the wobble position (U34) of certain tRNAs, forming tRNA-cmnm(5)s(2)U34. This is tRNA modification GTPase MnmE from Synechococcus sp. (strain CC9605).